We begin with the raw amino-acid sequence, 101 residues long: Small ribosomal subunit protein bS18c (101 aa).

This sequence belongs to the bacterial ribosomal protein bS18 family. Part of the 30S ribosomal subunit.

Its subcellular location is the plastid. It is found in the chloroplast. The protein is Small ribosomal subunit protein bS18c of Carica papaya (Papaya).